A 350-amino-acid chain; its full sequence is Quinone oxidoreductase-like protein 2 (350 aa).

An N6-acetyllysine modification is found at lysine 36. Lysine 201 carries the N6-succinyllysine modification. N6-acetyllysine occurs at positions 302 and 328.

Belongs to the zinc-containing alcohol dehydrogenase family. Quinone oxidoreductase subfamily.

This Mus musculus (Mouse) protein is Quinone oxidoreductase-like protein 2.